We begin with the raw amino-acid sequence, 113 residues long: Protein NATD1 (113 aa).

Low complexity predominate over residues 1-16 (MAQSPAAASPGAPEQG). The disordered stretch occupies residues 1-20 (MAQSPAAASPGAPEQGCPIR). Positions 22 to 112 (EHDRRRRQFT…PLPQYLERLQ (91 aa)) constitute an N-acetyltransferase domain.

This sequence belongs to the NATD1 family.

This chain is Protein NATD1 (NATD1), found in Bos taurus (Bovine).